We begin with the raw amino-acid sequence, 697 residues long: Ribosomal RNA large subunit methyltransferase K/L (697 aa).

Residues 43 to 154 (ILYNSLMWSR…QNLVHIMLDL (112 aa)) enclose the THUMP domain.

Belongs to the methyltransferase superfamily. RlmKL family.

It is found in the cytoplasm. The catalysed reaction is guanosine(2445) in 23S rRNA + S-adenosyl-L-methionine = N(2)-methylguanosine(2445) in 23S rRNA + S-adenosyl-L-homocysteine + H(+). It catalyses the reaction guanosine(2069) in 23S rRNA + S-adenosyl-L-methionine = N(2)-methylguanosine(2069) in 23S rRNA + S-adenosyl-L-homocysteine + H(+). Specifically methylates the guanine in position 2445 (m2G2445) and the guanine in position 2069 (m7G2069) of 23S rRNA. The protein is Ribosomal RNA large subunit methyltransferase K/L of Buchnera aphidicola subsp. Schizaphis graminum (strain Sg).